The following is a 188-amino-acid chain: Protein GrpE (188 aa).

The segment covering 1-10 (MPDPTQNPNV) has biased composition (polar residues). The disordered stretch occupies residues 1 to 35 (MPDPTQNPNVTPELEQHAAPEAAAEAAPESSADVM). A compositionally biased stretch (low complexity) spans 19–32 (APEAAAEAAPESSA).

Belongs to the GrpE family. In terms of assembly, homodimer.

It is found in the cytoplasm. In terms of biological role, participates actively in the response to hyperosmotic and heat shock by preventing the aggregation of stress-denatured proteins, in association with DnaK and GrpE. It is the nucleotide exchange factor for DnaK and may function as a thermosensor. Unfolded proteins bind initially to DnaJ; upon interaction with the DnaJ-bound protein, DnaK hydrolyzes its bound ATP, resulting in the formation of a stable complex. GrpE releases ADP from DnaK; ATP binding to DnaK triggers the release of the substrate protein, thus completing the reaction cycle. Several rounds of ATP-dependent interactions between DnaJ, DnaK and GrpE are required for fully efficient folding. The protein is Protein GrpE of Azoarcus sp. (strain BH72).